Consider the following 74-residue polypeptide: Conotoxin VxVIA (74 aa).

Residues Met-1 to Ala-22 form the signal peptide. The propeptide occupies Ala-23–Arg-47. 3 disulfide bridges follow: Cys-48/Cys-62, Cys-55/Cys-66, and Cys-61/Cys-73.

In terms of tissue distribution, expressed by the venom duct.

It is found in the secreted. When injected intracranially in mice, induces a series of symptoms such as quivering, climbing, scratching, barrel rolling and paralysis of limbs. Unexpectedly, no effect is observed on ionic currents when tested on locust DUM neuron. The chain is Conotoxin VxVIA from Conus vexillum (Flag cone).